The following is a 166-amino-acid chain: Keratin, type II cytoskeletal 68 kDa, component IB (166 aa).

An IF rod domain is found at Glu-1–Met-41. The coil 2B stretch occupies residues Glu-1–Met-41. Positions Ser-42 to Arg-166 are tail. Residues Gly-122–Ser-146 are compositionally biased toward gly residues. Residues Gly-122–Arg-166 form a disordered region. The segment covering Ser-147–Arg-166 has biased composition (low complexity).

It belongs to the intermediate filament family. As to quaternary structure, heterotetramer of two type I and two type II keratins.

In Bos taurus (Bovine), this protein is Keratin, type II cytoskeletal 68 kDa, component IB.